Reading from the N-terminus, the 734-residue chain is MALRFPRFSQGLAQDPTTRRIWFGIATAHDFESHDDITEERLYQNIFASHFGQLAIIFLWTSGNLFHVAWQGNFESWVQDPLHVRPIAHAIWDPHFGQPAVEAFTRGGALGPVNIAYSGVYQWWYTIGLRTNEDLYTGALFLLFLSAISLIAGWLHLQPKWKPSVSWFKNAESRLNHHLSGLFGVSSLAWTGHLVHVAIPGSRGEYVRWNNFLDVLPYPQGLGPLFTGQWNLYAQNPDSSSHLFGTSQGAGTAILTLLGGFHPQTQSLWLTDIAHHHLAIAFIFLVAGHMYRTNFGIGHSMKDLLEAHTPPGGRLGRGHKGLYDTINNSIHFQLGLALASLGVITSLVAQHMYSLPAYAFIAQDFTTQAALYTHHQYIAGFIMTGAFAHGAIFFIRDYNPEQNEDNVLARMLDHKEAIKSHLSWVSLFLGFHTLGLYVHNDVMLAFGTPEKQILIEPIFAQWIQSAHGKTSYGFDVLLSSTSGPAFNAGRSIWLPGWLNAVNENSNSLFLTIGPGDFLVHHAIALGLHTTTLILVKGALDARGSKLMPDKKDFGYSFPCDGPGRGGTCDISAWDAFYLAVFWMLNTIGWVTFYWHWKHITLWQGNVSQFNESSTYLMGWLRDYLWLNSSQLINGYNPFGTNSLSVWAWMFLFGHLVWATGFMFLISWRGYWQELIETLAWAHERTPLANLIRWRDKPVALSIVQARLVGLAHFSVGYIFTYAAFLIASTSGKFG.

8 consecutive transmembrane segments (helical) span residues 46-69, 135-158, 175-199, 273-291, 330-353, 369-395, 417-439, and 517-535; these read IFASHFGQLAIIFLWTSGNLFHVA, LYTGALFLLFLSAISLIAGWLHLQ, LNHHLSGLFGVSSLAWTGHLVHVAI, IAHHHLAIAFIFLVAGHMY, IHFQLGLALASLGVITSLVAQHMY, AALYTHHQYIAGFIMTGAFAHGAIFFI, AIKSHLSWVSLFLGFHTLGLYVH, and FLVHHAIALGLHTTTLILV. [4Fe-4S] cluster is bound by residues Cys559 and Cys568. 2 helical membrane passes run 575 to 596 and 643 to 665; these read AFYLAVFWMLNTIGWVTFYWHW and LSVWAWMFLFGHLVWATGFMFLI. Positions 654, 662, and 670 each coordinate chlorophyll a. Residue Trp671 coordinates phylloquinone. The chain crosses the membrane as a helical span at residues 707 to 727; the sequence is LVGLAHFSVGYIFTYAAFLIA.

It belongs to the PsaA/PsaB family. As to quaternary structure, the PsaA/B heterodimer binds the P700 chlorophyll special pair and subsequent electron acceptors. PSI consists of a core antenna complex that captures photons, and an electron transfer chain that converts photonic excitation into a charge separation. The eukaryotic PSI reaction center is composed of at least 11 subunits. P700 is a chlorophyll a/chlorophyll a' dimer, A0 is one or more chlorophyll a, A1 is one or both phylloquinones and FX is a shared 4Fe-4S iron-sulfur center. is required as a cofactor.

It is found in the plastid. The protein localises to the chloroplast thylakoid membrane. It carries out the reaction reduced [plastocyanin] + hnu + oxidized [2Fe-2S]-[ferredoxin] = oxidized [plastocyanin] + reduced [2Fe-2S]-[ferredoxin]. Its function is as follows. PsaA and PsaB bind P700, the primary electron donor of photosystem I (PSI), as well as the electron acceptors A0, A1 and FX. PSI is a plastocyanin-ferredoxin oxidoreductase, converting photonic excitation into a charge separation, which transfers an electron from the donor P700 chlorophyll pair to the spectroscopically characterized acceptors A0, A1, FX, FA and FB in turn. Oxidized P700 is reduced on the lumenal side of the thylakoid membrane by plastocyanin. The protein is Photosystem I P700 chlorophyll a apoprotein A2 of Liriodendron tulipifera (Tuliptree).